Reading from the N-terminus, the 394-residue chain is Probable 6-phosphogluconolactonase ARB_02015 (394 aa).

The N-terminal stretch at 1-21 (MKTVPFLSLLQAGILTSGIVA) is a signal peptide. Asparagine 51 carries an N-linked (GlcNAc...) asparagine glycan.

Belongs to the cycloisomerase 2 family.

Its subcellular location is the secreted. It carries out the reaction 6-phospho-D-glucono-1,5-lactone + H2O = 6-phospho-D-gluconate + H(+). It functions in the pathway carbohydrate degradation; pentose phosphate pathway; D-ribulose 5-phosphate from D-glucose 6-phosphate (oxidative stage): step 2/3. Catalyzes the hydrolysis of 6-phosphogluconolactone to 6-phosphogluconate. In Arthroderma benhamiae (strain ATCC MYA-4681 / CBS 112371) (Trichophyton mentagrophytes), this protein is Probable 6-phosphogluconolactonase ARB_02015.